The following is a 319-amino-acid chain: ATP-dependent 6-phosphofructokinase (319 aa).

Residue Gly-11 participates in ATP binding. 21 to 25 serves as a coordination point for ADP; the sequence is RAVVR. ATP is bound by residues 72–73 and 102–105; these read RC and GDGS. Residue Asp-103 coordinates Mg(2+). Substrate is bound at residue 125–127; it reads TID. Asp-127 (proton acceptor) is an active-site residue. Arg-154 is an ADP binding site. Residues Arg-162 and 169–171 contribute to the substrate site; that span reads MGR. ADP is bound by residues 185–187, Arg-211, and 213–215; these read GAE and KKH. Substrate is bound by residues Glu-222, Arg-243, and 249-252; that span reads HVQR.

It belongs to the phosphofructokinase type A (PFKA) family. ATP-dependent PFK group I subfamily. Prokaryotic clade 'B1' sub-subfamily. Homotetramer. Mg(2+) is required as a cofactor.

Its subcellular location is the cytoplasm. It catalyses the reaction beta-D-fructose 6-phosphate + ATP = beta-D-fructose 1,6-bisphosphate + ADP + H(+). It functions in the pathway carbohydrate degradation; glycolysis; D-glyceraldehyde 3-phosphate and glycerone phosphate from D-glucose: step 3/4. With respect to regulation, allosterically activated by ADP and other diphosphonucleosides, and allosterically inhibited by phosphoenolpyruvate. Catalyzes the phosphorylation of D-fructose 6-phosphate to fructose 1,6-bisphosphate by ATP, the first committing step of glycolysis. The chain is ATP-dependent 6-phosphofructokinase from Geobacillus kaustophilus (strain HTA426).